Consider the following 571-residue polypeptide: Proline--tRNA ligase (571 aa).

This sequence belongs to the class-II aminoacyl-tRNA synthetase family. ProS type 1 subfamily. In terms of assembly, homodimer.

The protein localises to the cytoplasm. It catalyses the reaction tRNA(Pro) + L-proline + ATP = L-prolyl-tRNA(Pro) + AMP + diphosphate. In terms of biological role, catalyzes the attachment of proline to tRNA(Pro) in a two-step reaction: proline is first activated by ATP to form Pro-AMP and then transferred to the acceptor end of tRNA(Pro). As ProRS can inadvertently accommodate and process non-cognate amino acids such as alanine and cysteine, to avoid such errors it has two additional distinct editing activities against alanine. One activity is designated as 'pretransfer' editing and involves the tRNA(Pro)-independent hydrolysis of activated Ala-AMP. The other activity is designated 'posttransfer' editing and involves deacylation of mischarged Ala-tRNA(Pro). The misacylated Cys-tRNA(Pro) is not edited by ProRS. In Leuconostoc citreum (strain KM20), this protein is Proline--tRNA ligase.